The following is a 173-amino-acid chain: MATSPVLFLLLAVFAAGASAATFNIKNNCGFTIWPAGIPVGGGFALGSGQTSSINVPAGTQAGRIWARTGCSFNGGSGSCQTGDCGGQLSCSLSGRPPATLAEYTIGGGSTQDFYDISVIDGFNLAMDFSCSTGDALQCRDPSCPPPQAYQHPNDVATHACSGNNNYQITFCP.

The first 20 residues, 1–20 (MATSPVLFLLLAVFAAGASA), serve as a signal peptide directing secretion.

It belongs to the thaumatin family.

The polypeptide is Thaumatin-like protein PWIR2 (Triticum aestivum (Wheat)).